A 177-amino-acid chain; its full sequence is ADP-ribosylation factor-like protein 17 (177 aa).

Glycine 2 carries N-myristoyl glycine lipidation. Residues 24-31 (SLDTAGKT), 67-71 (DVGSH), and 125-128 (LPHS) contribute to the GTP site.

The protein belongs to the small GTPase superfamily. Arf family.

The protein resides in the golgi apparatus. Its function is as follows. GTP-binding protein that functions as an allosteric activator of the cholera toxin catalytic subunit, an ADP-ribosyltransferase. Involved in protein trafficking; may modulate vesicle budding and uncoating within the Golgi apparatus. In Homo sapiens (Human), this protein is ADP-ribosylation factor-like protein 17 (ARL17A).